The following is an 80-amino-acid chain: Ubiquinol-cytochrome c reductase complex assembly factor 5 (80 aa).

The Mitochondrial matrix portion of the chain corresponds to 1–19 (MFSRAQVRRALQRVPGKQR). Residues 20-41 (FGIYRFLPFFFVLGGAMEWIMI) traverse the membrane as a helical segment. Over 42-80 (KVRVGQETFYDVYRRKASERQYQRRLEDTSETNLHKLIK) the chain is Mitochondrial intermembrane.

This sequence belongs to the UQCC5 family. Associates with the mitochondrial ribosome. Interacts with UQCC6. Interacts with MT-CYB; interacts with newly synthesizes MT-CYB. Forms a complex, named COMB/coordinator of mitochondrial CYTB biogenesis, composed of UQCC1, UQCC2, UQCC4, UQCC5 and UQCC6; stabilizes nascent cytochrome b/MT-CYB and promotes its membrane insertion.

It is found in the mitochondrion inner membrane. In terms of biological role, required for the assembly and stability of the mitochondrial ubiquinol-cytochrome c reductase complex (complex III (CIII) or cytochrome b-c1 complex), a multisubunit transmembrane complex that is part of the mitochondrial electron transport chain (ETC) which drives oxidative phosphorylation. Mediates early complex III biogenesis. Participates in regulating the levels of electron transport chain proteins, and therefore energy supply, in response to changes in energy demand. Also required for cytochrome c oxidase complex (complex IV) assembly. The sequence is that of Ubiquinol-cytochrome c reductase complex assembly factor 5 from Mus musculus (Mouse).